The primary structure comprises 154 residues: Large ribosomal subunit protein uL22 (154 aa).

It belongs to the universal ribosomal protein uL22 family. In terms of assembly, part of the 50S ribosomal subunit.

This protein binds specifically to 23S rRNA. It makes multiple contacts with different domains of the 23S rRNA in the assembled 50S subunit and ribosome. In terms of biological role, the globular domain of the protein is located near the polypeptide exit tunnel on the outside of the subunit, while an extended beta-hairpin is found that lines the wall of the exit tunnel in the center of the 70S ribosome. This is Large ribosomal subunit protein uL22 from Natronomonas pharaonis (strain ATCC 35678 / DSM 2160 / CIP 103997 / JCM 8858 / NBRC 14720 / NCIMB 2260 / Gabara) (Halobacterium pharaonis).